We begin with the raw amino-acid sequence, 449 residues long: Glucose-6-phosphate isomerase (449 aa).

Glutamate 291 serves as the catalytic Proton donor. Residues histidine 312 and lysine 426 contribute to the active site.

Belongs to the GPI family.

Its subcellular location is the cytoplasm. It catalyses the reaction alpha-D-glucose 6-phosphate = beta-D-fructose 6-phosphate. It functions in the pathway carbohydrate biosynthesis; gluconeogenesis. It participates in carbohydrate degradation; glycolysis; D-glyceraldehyde 3-phosphate and glycerone phosphate from D-glucose: step 2/4. In terms of biological role, catalyzes the reversible isomerization of glucose-6-phosphate to fructose-6-phosphate. The protein is Glucose-6-phosphate isomerase of Streptococcus pyogenes serotype M6 (strain ATCC BAA-946 / MGAS10394).